We begin with the raw amino-acid sequence, 131 residues long: ITEFSWNKYLYELIQRFEYWTVFCTSVNTSSSEGFLIGVNYLGPYCDKAIVDGNIMHANYIFWRNSTIMALSHNSVLDTPKFKCRCNNALIVNLKEKELNEMVIGLLRKGKLLIRNNGKLLNFGNHFINTP.

The 128-residue stretch at 1–128 (ITEFSWNKYL…KLLNFGNHFI (128 aa)) folds into the Nidovirus-type SAM-dependent 2'-O-MTase domain.

In terms of biological role, the replicase polyprotein of coronaviruses is a multifunctional protein: it contains the activities necessary for the transcription of negative stranded RNA, leader RNA, subgenomic mRNAs and progeny virion RNA as well as proteinases responsible for the cleavage of the polyprotein into functional products. This Sus scrofa (Pig) protein is Replicase polyprotein 1ab (rep).